The primary structure comprises 283 residues: Pantoate--beta-alanine ligase (283 aa).

Belongs to the pantothenate synthetase family.

The enzyme catalyses (R)-pantoate + beta-alanine + ATP = (R)-pantothenate + AMP + diphosphate + H(+). It functions in the pathway cofactor biosynthesis; (R)-pantothenate biosynthesis; (R)-pantothenate from (R)-pantoate and beta-alanine: step 1/1. The protein is Pantoate--beta-alanine ligase (pan6) of Schizosaccharomyces pombe (strain 972 / ATCC 24843) (Fission yeast).